The sequence spans 449 residues: Tubulin beta chain (449 aa).

GTP is bound by residues Gln11, Glu69, Ser138, Gly142, Thr143, Gly144, Asn204, and Asn226. Glu69 lines the Mg(2+) pocket.

The protein belongs to the tubulin family. Dimer of alpha and beta chains. A typical microtubule is a hollow water-filled tube with an outer diameter of 25 nm and an inner diameter of 15 nM. Alpha-beta heterodimers associate head-to-tail to form protofilaments running lengthwise along the microtubule wall with the beta-tubulin subunit facing the microtubule plus end conferring a structural polarity. Microtubules usually have 13 protofilaments but different protofilament numbers can be found in some organisms and specialized cells. It depends on Mg(2+) as a cofactor.

It localises to the cytoplasm. The protein resides in the cytoskeleton. In terms of biological role, tubulin is the major constituent of microtubules, a cylinder consisting of laterally associated linear protofilaments composed of alpha- and beta-tubulin heterodimers. Microtubules grow by the addition of GTP-tubulin dimers to the microtubule end, where a stabilizing cap forms. Below the cap, tubulin dimers are in GDP-bound state, owing to GTPase activity of alpha-tubulin. In Candida albicans (Yeast), this protein is Tubulin beta chain (TUB2).